We begin with the raw amino-acid sequence, 30 residues long: Cyclotide hypa-A (30 aa).

The segment at residues 1–30 (GIPCAESCVYIPCTITALLGCSCKNKVCYN) is a cross-link (cyclopeptide (Gly-Asn)). 3 disulfide bridges follow: Cys-4–Cys-21, Cys-8–Cys-23, and Cys-13–Cys-28.

Post-translationally, this is a cyclic peptide.

In terms of biological role, probably participates in a plant defense mechanism. In Pombalia parviflora (Violetilla), this protein is Cyclotide hypa-A.